The chain runs to 200 residues: NAD(P)H dehydrogenase (quinone) (200 aa).

Residues 4-191 (ILVLYHSLWG…TIARFQGRHV (188 aa)) form the Flavodoxin-like domain. FMN-binding positions include 10-15 (SLWGHV) and 79-81 (TRF). NAD(+) is bound at residue Trp-12. Trp-99 contributes to the substrate binding site. FMN contacts are provided by residues 114–120 (STATQHG) and His-135.

Belongs to the WrbA family. It depends on FMN as a cofactor.

It catalyses the reaction a quinone + NADH + H(+) = a quinol + NAD(+). The enzyme catalyses a quinone + NADPH + H(+) = a quinol + NADP(+). This chain is NAD(P)H dehydrogenase (quinone), found in Acidithiobacillus ferrooxidans (strain ATCC 53993 / BNL-5-31) (Leptospirillum ferrooxidans (ATCC 53993)).